The chain runs to 163 residues: Staphylokinase (163 aa).

An N-terminal signal peptide occupies residues 1–27 (MLKRSLLFLTVLLLLFSFSSITNEVSA).

Belongs to the staphylokinase family.

Its subcellular location is the secreted. In terms of biological role, potent plasminogen activator that converts plasminogen into plasmin. It forms a 1:1 complex with plasmin, which in turn activates other plasminogen molecules. This Staphylococcus aureus (strain MW2) protein is Staphylokinase (sak).